Consider the following 336-residue polypeptide: L-rhamnono-gamma-lactonase (336 aa).

The protein belongs to the metallo-dependent hydrolases superfamily. The cofactor is a divalent metal cation.

It catalyses the reaction L-rhamnono-1,4-lactone + H2O = L-rhamnonate + H(+). Inhibited by Zn(2+), Fe(2+) and Cu(2+), but not by EDTA. In terms of biological role, hydrolase with high substrate specificity for L-rhamnono-1,4-lactone. Catalyzes the second step in an alternative pathway for rhamnose utilization that does not involve phosphorylated intermediates. This Scheffersomyces stipitis (strain ATCC 58785 / CBS 6054 / NBRC 10063 / NRRL Y-11545) (Yeast) protein is L-rhamnono-gamma-lactonase (LRA2).